Here is a 1044-residue protein sequence, read N- to C-terminus: Pre-mRNA-splicing factor ATP-dependent RNA helicase DEAH1 (1044 aa).

Positions 106 to 206 (EVVVEKKSSV…TLSKKEKEEA (101 aa)) are disordered. Over residues 108-121 (VVEKKSSVSESRKS) the composition is skewed to basic and acidic residues. Basic residues predominate over residues 122 to 132 (DKGKKRFRKKS). Phosphoserine occurs at positions 135 and 138. Positions 157–166 (EEDDGSESEE) are enriched in acidic residues. A compositionally biased stretch (basic and acidic residues) spans 167–206 (ERVRDQKEREELEQHLKDRDTARTRKLTEQTLSKKEKEEA). The Helicase ATP-binding domain maps to 414 to 577 (LKAVEEHQVL…FDTAPIFSFP (164 aa)). An ATP-binding site is contributed by 427-434 (GDTGSGKT). Residues 524–527 (DEAH) carry the DEAH box motif. The 176-residue stretch at 600 to 775 (IVTILTIHVR…SVVLALKSLG (176 aa)) folds into the Helicase C-terminal domain.

The protein belongs to the DEAD box helicase family. DEAH subfamily. PRP2 sub-subfamily. As to expression, widely expressed.

The catalysed reaction is ATP + H2O = ADP + phosphate + H(+). In terms of biological role, involved in pre-mRNA splicing. In Arabidopsis thaliana (Mouse-ear cress), this protein is Pre-mRNA-splicing factor ATP-dependent RNA helicase DEAH1.